We begin with the raw amino-acid sequence, 416 residues long: Adenylosuccinate synthetase (416 aa).

Residues 13–19 (GDEGKGK) and 41–43 (GHT) contribute to the GTP site. Asp14 serves as the catalytic Proton acceptor. Asp14 and Gly41 together coordinate Mg(2+). IMP contacts are provided by residues 14-17 (DEGK), 39-42 (NAGH), Thr126, Arg140, Gln220, Thr235, and Arg299. His42 functions as the Proton donor in the catalytic mechanism. 295–301 (TTTGRKR) contributes to the substrate binding site. GTP contacts are provided by residues Arg301, 327–329 (KLD), and 405–407 (STS).

The protein belongs to the adenylosuccinate synthetase family. In terms of assembly, homodimer. It depends on Mg(2+) as a cofactor.

The protein resides in the cytoplasm. The catalysed reaction is IMP + L-aspartate + GTP = N(6)-(1,2-dicarboxyethyl)-AMP + GDP + phosphate + 2 H(+). It participates in purine metabolism; AMP biosynthesis via de novo pathway; AMP from IMP: step 1/2. Functionally, plays an important role in the de novo pathway of purine nucleotide biosynthesis. Catalyzes the first committed step in the biosynthesis of AMP from IMP. This is Adenylosuccinate synthetase from Campylobacter hominis (strain ATCC BAA-381 / DSM 21671 / CCUG 45161 / LMG 19568 / NCTC 13146 / CH001A).